We begin with the raw amino-acid sequence, 713 residues long: F-box/WD repeat-containing protein 7 (713 aa).

The disordered stretch occupies residues 1-150; that stretch reads MNQELLSVGS…DEHTHNSNVT (150 aa). S26 carries the post-translational modification Phosphoserine. Basic and acidic residues predominate over residues 46 to 55; it reads RHQEEEHTAR. Residues 69–84 are compositionally biased toward polar residues; that stretch reads QNDSQQGQVEENNNRF. Residues 87–135 are compositionally biased toward acidic residues; that stretch reads VDEDSSGNQEEQEEDEEHAGEQEEEEEEEEEEEEEEEMDQESDDFDQSD. A coiled-coil region spans residues 94-136; that stretch reads NQEEQEEDEEHAGEQEEEEEEEEEEEEEEEMDQESDDFDQSDD. The segment covering 136-145 has biased composition (basic and acidic residues); it reads DSSREDEHTH. T211 is modified (phosphothreonine). S233 carries the post-translational modification Phosphoserine. One can recognise an F-box domain in the interval 284-330; it reads RDFISLLPKELALYVLSFLEPKDLLQAAQTCRYWRILAEDNLLWREK. WD repeat units lie at residues 384–424, 426–462, 465–504, 506–542, 545–584, 586–624, and 628–665; these read GHDD…RTLV, HTGG…CIHT, GHTS…HVLM, HVAA…CLHT, GHTN…HTLT, HQSL…QTLQ, and KHQS…FIRN.

Homodimer; homodimerization plays a role in substrate binding and/or ubiquitination and degradation. Component of the SCF(FBXW7) complex consisting of CUL1, RBX1, SKP1 and FBXW7. Interacts (via F-box domain) with SKP1. Interacts (via F-box domain) with pseudophosphatase STYX; the interaction is direct and prevents FBXW7 interaction with SKP1. Interacts with cyclin-E (CCNE1 or CCNE2). Interacts with PSEN1. Forms a trimeric complex with NOTCH1 and SGK1. Interacts with NOTCH1 intracellular domain/NICD and NOTCH4 intracellular domain/NICD. Interacts with NOTCH2 intracellular domain (N2ICD). Interacts with MYC (when phosphorylated). Interacts with USP28, counteracting ubiquitination of MYC. Interacts (when phosphorylated at Thr-211) with PIN1, disrupting FBXW7 dimerization and promoting FBXW7 autoubiquitination and degradation. Interacts with UBE2QL1. Interacts with FAM83D; promotes FBXW7 degradation. Interacts with MYCN; FBXW7 competes with AURKA for binding to unphosphorylated MYCN but not for binding to phosphorylated MYCN. Interacts with JUN. Found in a complex with JUN and PRR7. Interacts with JUN and PRR7; the interaction inhibits ubiquitination-mediated JUN degradation, promoting its phosphorylation and transcriptional activity. Interacts with NFE2L1. Interacts with NR1D1. Interacts with RICTOR; mediates RICTOR ubiquitination and degradation. Phosphorylation at Thr-211 promotes interaction with PIN1, leading to disrupt FBXW7 dimerization and promoting FBXW7 autoubiquitination and degradation. Phosphorylated by ATM at Ser-26 in response to DNA damage, promoting recruitment to DNA damage sites and 'Lys-63'-linked ubiquitination of phosphorylated XRCC4. Post-translationally, ubiquitinated: autoubiquitinates following phosphorylation at Thr-211 and subsequent interaction with PIN1. Ubiquitination leads to its degradation.

The protein resides in the nucleus. It is found in the nucleoplasm. It localises to the chromosome. Its pathway is protein modification; protein ubiquitination. Functionally, substrate recognition component of a SCF (SKP1-CUL1-F-box protein) E3 ubiquitin-protein ligase complex which mediates the ubiquitination and subsequent proteasomal degradation of target proteins. Recognizes and binds phosphorylated sites/phosphodegrons within target proteins and thereafter brings them to the SCF complex for ubiquitination. Identified substrates include cyclin-E (CCNE1 or CCNE2), JUN, MYC, NOTCH1 released notch intracellular domain (NICD), NOTCH2, MCL1, MLST8, RICTOR and probably PSEN1. Acts as a negative regulator of JNK signaling by binding to phosphorylated JUN and promoting its ubiquitination and subsequent degradation. SCF(FBXW7) complex mediates the ubiquitination and subsequent degradation of NFE2L1. Involved in bone homeostasis and negative regulation of osteoclast differentiation. Regulates the amplitude of the cyclic expression of hepatic core clock genes and genes involved in lipid and glucose metabolism via ubiquitination and proteasomal degradation of their transcriptional repressor NR1D1; CDK1-dependent phosphorylation of NR1D1 is necessary for SCF(FBXW7)-mediated ubiquitination. Also able to promote 'Lys-63'-linked ubiquitination in response to DNA damage. The SCF(FBXW7) complex facilitates double-strand break repair following phosphorylation by ATM: phosphorylation promotes localization to sites of double-strand breaks and 'Lys-63'-linked ubiquitination of phosphorylated XRCC4, enhancing DNA non-homologous end joining. The polypeptide is F-box/WD repeat-containing protein 7 (Rattus norvegicus (Rat)).